Consider the following 128-residue polypeptide: uncharacterized protein (128 aa).

Positions 1 to 11 (MDNKKKEENPS) are enriched in basic and acidic residues. The interval 1-40 (MDNKKKEENPSKSDTSISLPPSSTGEALQNYTESEWNASD) is disordered. Polar residues predominate over residues 12–37 (KSDTSISLPPSSTGEALQNYTESEWN).

This is an uncharacterized protein from Caenorhabditis elegans.